We begin with the raw amino-acid sequence, 43 residues long: Alpha-conotoxin-like Leo-A1 (43 aa).

A propeptide spanning residues 1 to 26 is cleaved from the precursor; sequence LTLDRASDDTDVAAEIMSGLIALAID. 2 disulfides stabilise this stretch: Cys28–Cys34 and Cys29–Cys42. The segment at 30 to 32 is lacks the Ser-Xaa-Pro motif that is crucial for potent interaction with nAChR; it reads SDS.

The protein belongs to the conotoxin A superfamily. In terms of tissue distribution, expressed by the venom duct.

The protein localises to the secreted. Its function is as follows. Alpha-conotoxins act on postsynaptic membranes, they bind to the nicotinic acetylcholine receptors (nAChR) and thus inhibit them. Has possibly a distinct nAChR binding mode from other alpha-conotoxins, due to a different three residue motif (lacks the Ser-Xaa-Pro motif). The polypeptide is Alpha-conotoxin-like Leo-A1 (Conus leopardus (Leopard cone)).